Reading from the N-terminus, the 497-residue chain is Probable cytosol aminopeptidase (497 aa).

The Mn(2+) site is built by K267 and D272. Residue K279 is part of the active site. Mn(2+) contacts are provided by D290, D349, and E351. The active site involves R353.

Belongs to the peptidase M17 family. Requires Mn(2+) as cofactor.

The protein resides in the cytoplasm. It carries out the reaction Release of an N-terminal amino acid, Xaa-|-Yaa-, in which Xaa is preferably Leu, but may be other amino acids including Pro although not Arg or Lys, and Yaa may be Pro. Amino acid amides and methyl esters are also readily hydrolyzed, but rates on arylamides are exceedingly low.. The catalysed reaction is Release of an N-terminal amino acid, preferentially leucine, but not glutamic or aspartic acids.. In terms of biological role, presumably involved in the processing and regular turnover of intracellular proteins. Catalyzes the removal of unsubstituted N-terminal amino acids from various peptides. This is Probable cytosol aminopeptidase from Pseudomonas entomophila (strain L48).